The following is a 931-amino-acid chain: Isoleucine--tRNA ligase (931 aa).

Positions 57-67 (PYANGNIHIGH) match the 'HIGH' region motif. L-isoleucyl-5'-AMP is bound at residue Glu555. Positions 596 to 600 (KMSKS) match the 'KMSKS' region motif. Lys599 lines the ATP pocket. 4 residues coordinate Zn(2+): Cys890, Cys893, Cys910, and Cys913.

This sequence belongs to the class-I aminoacyl-tRNA synthetase family. IleS type 1 subfamily. As to quaternary structure, monomer. It depends on Zn(2+) as a cofactor.

The protein resides in the cytoplasm. It catalyses the reaction tRNA(Ile) + L-isoleucine + ATP = L-isoleucyl-tRNA(Ile) + AMP + diphosphate. Its function is as follows. Catalyzes the attachment of isoleucine to tRNA(Ile). As IleRS can inadvertently accommodate and process structurally similar amino acids such as valine, to avoid such errors it has two additional distinct tRNA(Ile)-dependent editing activities. One activity is designated as 'pretransfer' editing and involves the hydrolysis of activated Val-AMP. The other activity is designated 'posttransfer' editing and involves deacylation of mischarged Val-tRNA(Ile). The sequence is that of Isoleucine--tRNA ligase from Limosilactobacillus reuteri subsp. reuteri (strain JCM 1112) (Lactobacillus reuteri).